Consider the following 156-residue polypeptide: Protein SprT (156 aa).

The SprT-like domain maps to 15 to 153 (NRYFNKHFTP…CKKCKEILVL (139 aa)). H67 is a Zn(2+) binding site. E68 is a catalytic residue. Residue H71 coordinates Zn(2+).

It belongs to the SprT family. Requires Zn(2+) as cofactor.

It is found in the cytoplasm. This chain is Protein SprT, found in Glaesserella parasuis serovar 5 (strain SH0165) (Haemophilus parasuis).